We begin with the raw amino-acid sequence, 174 residues long: Sarcoplasmic calcium-binding protein (174 aa).

Residue S1 is modified to N-acetylserine. EF-hand domains lie at L3–E38, G55–S90, V91–D126, and K127–N160. 4 residues coordinate Ca(2+): D16, D18, D20, and D27. 9 residues coordinate Ca(2+): D104, N106, D108, N110, E115, D138, N140, D142, and E149.

Its function is as follows. Like parvalbumins, SCPs seem to be more abundant in fast contracting muscles, but no functional relationship can be established from this distribution. The sequence is that of Sarcoplasmic calcium-binding protein from Hediste diversicolor (Sandworm).